The following is a 103-amino-acid chain: Large ribosomal subunit protein bL21 (103 aa).

Belongs to the bacterial ribosomal protein bL21 family. In terms of assembly, part of the 50S ribosomal subunit. Contacts protein L20.

Functionally, this protein binds to 23S rRNA in the presence of protein L20. This chain is Large ribosomal subunit protein bL21, found in Pectobacterium atrosepticum (strain SCRI 1043 / ATCC BAA-672) (Erwinia carotovora subsp. atroseptica).